A 338-amino-acid polypeptide reads, in one-letter code: Glycerol-3-phosphate dehydrogenase [NAD(P)+] (338 aa).

Residues serine 12, tryptophan 13, and lysine 110 each contribute to the NADPH site. Positions 110, 141, and 143 each coordinate sn-glycerol 3-phosphate. Residue alanine 145 participates in NADPH binding. Residues lysine 196, aspartate 249, serine 259, arginine 260, and asparagine 261 each contribute to the sn-glycerol 3-phosphate site. Residue lysine 196 is the Proton acceptor of the active site. Residue arginine 260 participates in NADPH binding. Positions 284 and 286 each coordinate NADPH.

This sequence belongs to the NAD-dependent glycerol-3-phosphate dehydrogenase family.

Its subcellular location is the cytoplasm. It carries out the reaction sn-glycerol 3-phosphate + NAD(+) = dihydroxyacetone phosphate + NADH + H(+). It catalyses the reaction sn-glycerol 3-phosphate + NADP(+) = dihydroxyacetone phosphate + NADPH + H(+). It participates in membrane lipid metabolism; glycerophospholipid metabolism. Its function is as follows. Catalyzes the reduction of the glycolytic intermediate dihydroxyacetone phosphate (DHAP) to sn-glycerol 3-phosphate (G3P), the key precursor for phospholipid synthesis. The polypeptide is Glycerol-3-phosphate dehydrogenase [NAD(P)+] (Lactiplantibacillus plantarum (strain ATCC BAA-793 / NCIMB 8826 / WCFS1) (Lactobacillus plantarum)).